A 201-amino-acid polypeptide reads, in one-letter code: 3-isopropylmalate dehydratase small subunit (201 aa).

It belongs to the LeuD family. LeuD type 1 subfamily. As to quaternary structure, heterodimer of LeuC and LeuD.

The enzyme catalyses (2R,3S)-3-isopropylmalate = (2S)-2-isopropylmalate. It participates in amino-acid biosynthesis; L-leucine biosynthesis; L-leucine from 3-methyl-2-oxobutanoate: step 2/4. Catalyzes the isomerization between 2-isopropylmalate and 3-isopropylmalate, via the formation of 2-isopropylmaleate. The sequence is that of 3-isopropylmalate dehydratase small subunit from Shigella flexneri serotype 5b (strain 8401).